A 578-amino-acid polypeptide reads, in one-letter code: A-type ATP synthase subunit A (578 aa).

228–235 lines the ATP pocket; the sequence is GPFGSGKT.

The protein belongs to the ATPase alpha/beta chains family. As to quaternary structure, has multiple subunits with at least A(3), B(3), C, D, E, F, H, I and proteolipid K(x).

The protein resides in the cell membrane. The enzyme catalyses ATP + H2O + 4 H(+)(in) = ADP + phosphate + 5 H(+)(out). Its function is as follows. Component of the A-type ATP synthase that produces ATP from ADP in the presence of a proton gradient across the membrane. The A chain is the catalytic subunit. The sequence is that of A-type ATP synthase subunit A from Methanococcoides burtonii (strain DSM 6242 / NBRC 107633 / OCM 468 / ACE-M).